The primary structure comprises 1223 residues: MEIPIQVAVRICPYTEPSENRKPVAGAEADASAFGNAEAKAESFSDSEDNKNDASNRQRPEESTDANGNSEGGRQLKKETLPTDSNGNENGTIVPLGSGCCVQAIPISASALGLPSALPGGRAQDSIAAGLIQVGAHTVPVTHALGSGTTQSQLYYQTVFPLISLFLEGFDASVVTYGQRGQGKTYTLYGPGFECVYGEADQGVVQRCVRDIFAHIAGHSERTYAVNVGFVEICEGEVCDLLDMGNVHCQSVEEVFRWLQIGLATRQPKSAHSLFTLTLEQQWVSKEGLIQHRLSTASFSDLCATERWGEPPPGNPRDAGLQMLELVVNTLTDPSIMYGVNGNIPYGQTTLTTLLKDSFGGRAQTLVILCVSPQEQHVAETLGNLQFAFKVQCVRNYVIMNTYSDDNTPISPETMPNGSSNPGAGPLAQVAAGDNFGLQFAASQWFKLVSNAEGLFAKLMASNLISELEKEQIEEWLFLKQECEECLSSTEAMRSQKQLVPIQEAEEPEESVSEPPNSDNDTDNESQRPDLADKLESLMEEFRAKTDALIQSKHAEFLTKHPKAVMQSQERDKESKLDAPPEKDKEKIEERKTSIAGRRRSIQPGASLSTAELALLNRVALQQPTAQPPPSVLDPESSIDPLESSAGEGLRQAAIAAAAANAPIEQLQKKLRKLHAEIEGRQRQLKEIEQTMQVKQNIISELVKNSDTRSHAKQRFQKKKAKLEAECDKAKKHLAKALIQGREKGETERWSAIIAHIEHRLEDLSSMKHIAGESGQKLKKLQQSMAESRKQQEELEKKIRKESKLRDQLETELAKLKESRDGASGGKELVKLDSPEQQGRQLKAVQARITHLNHILREKSDNLEECAGGEGPAPAQQESLRHEIRNLRGTRDLLLDERCHLDRKLKRDKMLTQREERKLLECDEAIEAIDAAIEFKNELICGHKSIDTSDRLQREKGEQMLMARLNKLSPEEMRTLLYKYFNKVIDLRDSSRKLELQLVQLERERDAWEWKERVLSNAVRQARLEGERNAVLLQRQHEMKLTLMLRHLAEETSASSASYGERALAPGHQTSSGDFDYELDFYKAAATTTTTTNHKALVKPPKSTPSGAALEKYKDKEQRGAGRNIFAKFQVLTRYASSAASAAAAGSCSSTVDESTALIESTTTATATTTTTTTTTTTGGKGKERGLPNIRQDQLKRLMPAPTVTKVTRQKNKIIIQDASRRN.

Positions 4–394 (PIQVAVRICP…LQFAFKVQCV (391 aa)) constitute a Kinesin motor domain. Residues 13-90 (PYTEPSENRK…LPTDSNGNEN (78 aa)) form a disordered region. The segment covering 39-62 (AKAESFSDSEDNKNDASNRQRPEE) has biased composition (basic and acidic residues). 178–185 (GQRGQGKT) contacts ATP. 3 disordered regions span residues 494-528 (RSQKQLVPIQEAEEPEESVSEPPNSDNDTDNESQR), 560-604 (KHPK…SIQP), and 625-646 (TAQPPPSVLDPESSIDPLESSA). Residues 569 to 593 (QERDKESKLDAPPEKDKEKIEERKT) show a composition bias toward basic and acidic residues. Coiled-coil stretches lie at residues 658 to 743 (AAAN…QGRE), 773 to 825 (ESGQ…GASG), and 982 to 1015 (NKVIDLRDSSRKLELQLVQLERERDAWEWKERVL). Residues 774-799 (SGQKLKKLQQSMAESRKQQEELEKKI) are disordered. A compositionally biased stretch (basic and acidic residues) spans 787-799 (ESRKQQEELEKKI). Residues 1162 to 1178 (TTTATATTTTTTTTTTT) show a composition bias toward low complexity. The tract at residues 1162-1188 (TTTATATTTTTTTTTTTGGKGKERGLP) is disordered.

Belongs to the TRAFAC class myosin-kinesin ATPase superfamily. Kinesin family. KIF27 subfamily. As to quaternary structure, homodimer (Potential). Binds microtubules. Interacts with ci, smo, sgg, CkIalpha and protein kinase A catalytic subunit.

Its subcellular location is the cytoplasm. It localises to the cytoskeleton. Regulates cubitus interruptus (ci) processing by recruiting multiple kinases to promote its efficient phosphorylation. Scaffolds multiple kinases and ci into proximity to promote its hyperphosphorylation, which then targets it for SCFSlimb/proteasome-mediated processing to generate its repressor form. Hh signaling inhibits ci phosphorylation by interfering with the cos-ci-kinases complex formation. The sequence is that of Kinesin-like protein costa (cos) from Drosophila pseudoobscura pseudoobscura (Fruit fly).